The sequence spans 455 residues: UDP-glycosyltransferase 87A2 (455 aa).

An N-acetylmethionine modification is found at Met1. UDP-alpha-D-glucose contacts are provided by residues Ser278, Cys327 to Gln329, His344 to Glu352, and Phe366 to Gln369.

It belongs to the UDP-glycosyltransferase family.

This is UDP-glycosyltransferase 87A2 (UGT87A2) from Arabidopsis thaliana (Mouse-ear cress).